We begin with the raw amino-acid sequence, 418 residues long: L-glutamine:2-deoxy-scyllo-inosose aminotransferase (418 aa).

Position 192 is an N6-(pyridoxal phosphate)lysine (lysine 192).

Belongs to the DegT/DnrJ/EryC1 family. L-glutamine:2-deoxy-scyllo-inosose/scyllo-inosose aminotransferase subfamily. Requires pyridoxal 5'-phosphate as cofactor.

The enzyme catalyses 2-deoxy-L-scyllo-inosose + L-glutamine = 2-deoxy-scyllo-inosamine + 2-oxoglutaramate. It carries out the reaction 3-amino-2,3-dideoxy-scyllo-inosose + L-glutamine = 2-deoxystreptamine + 2-oxoglutaramate. It functions in the pathway metabolic intermediate biosynthesis; 2-deoxystreptamine biosynthesis; 2-deoxystreptamine from D-glucose 6-phosphate: step 2/4. Its pathway is metabolic intermediate biosynthesis; 2-deoxystreptamine biosynthesis; 2-deoxystreptamine from D-glucose 6-phosphate: step 4/4. The protein operates within antibiotic biosynthesis; butirosin biosynthesis. Catalyzes the PLP-dependent transamination of 2-deoxy-scyllo-inosose (2-DOI) to form 2-deoxy-scyllo-inosamine (2-DOIA) using L-glutamine as the amino donor. Also catalyzes the transamination of 3-amino-2,3-dideoxy-scyllo-inosose (keto-2-DOIA) into 2-deoxystreptamine (2-DOS). The polypeptide is L-glutamine:2-deoxy-scyllo-inosose aminotransferase (btrR) (Niallia circulans (Bacillus circulans)).